The primary structure comprises 228 residues: Dehydrin Rab25 (228 aa).

Disordered regions lie at residues methionine 1 to histidine 68 and alanine 115 to histidine 228. Composition is skewed to basic and acidic residues over residues lysine 169–glutamine 187 and lysine 212–histidine 228.

This sequence belongs to the plant dehydrin family.

The protein is Dehydrin Rab25 (RAB25) of Oryza sativa subsp. japonica (Rice).